Reading from the N-terminus, the 967-residue chain is MSSKSYYTWKYPDIPENVESMLAELNNSLVVVGVIGRSRGPQANKMSAFDMRPNKLHEPADGQILCYYKPGTNTLMLHFETTYDEAVLSQQLLSQTSIDFDNFYYRMRSRFVRNMLLALHVCHIVVYVDTAEIFDTTLVTICQLLKYVREQHVLEFLPQMLHETSVGLMLGDRARPCTPRMLFLFENYPRDEEKTRDHISSYEFKTEDQIYHLLRQYNILTNNVNTSLVALPNNKQFVFYNAHEELHPDQLSHAIEALNTTMNKPDAKEEDEDLDIISLAPFEGFVKPFGADYKTRDSKELDYKKNHTAWHFLQRHVQDALQGYFDEGSFKLLTQTPQYQLLSARDWHSCMAEIYRLLIQNVHDANYVTDNTNYQAYLRELNESLNYEKKFWCHLCELGLKKGVSAYRNAAPAIYGSATHNQLLADATLAFEEEGRGPYVEMALAKLSDVCLKYWHDGRQQCEQLSLRGHPCTLPKDLAHDKHSSGIVHISSCNCGRTQGRREDPFTLRQANYDYYEQLAVMCNLCVKVKKFQFPLFTPSISDYRAAAFEAAFPLLLASKNRLEPAVQGDSDLDAEAADELYSQPIKAAEPAPQKQLQTLGDCCSQPLSATYGSDLNMSIAGFGDSLNEGEDADADADSPEIRSQICSSGQSSRSRSNSSSSDTSSANTENELVLQLKERSDQKNATEALSESCPESQSVASMPELVSTTEYLPGLVHMCSACELLPLFPSWSLACVGPSSIYSHNTGLQEHFQSGFLSGANFLLPWDVHVRLLQPHHKHPPLQQMGKKNQRYRKQGDRLALKIFVGFEYECSRGHRFMMCSPDRVLRGGADIERDTCSKLVNNNMPLYFPCPCRGQVSFLAQLMRIHVVTPKAPVNIIVDPKVRVGKYTFTLGCTVLPRLSQSAYWILRFPYVYQGDNVLIAPPAKFEPDDPFASGCLLAGMFGIAETDTTDAIQSAGAPLNFTRL.

Residues 627 to 702 (LNEGEDADAD…SCPESQSVAS (76 aa)) form a disordered region. The segment covering 628–639 (NEGEDADADADS) has biased composition (acidic residues). The span at 643–666 (RSQICSSGQSSRSRSNSSSSDTSS) shows a compositional bias: low complexity. Polar residues predominate over residues 686-702 (ATEALSESCPESQSVAS).

Belongs to the SMG8 family.

Functionally, involved in nonsense-mediated decay (NMD) of mRNAs containing premature stop codons. Probable component of kinase complex containing nonC and recruited to stalled ribosomes. The polypeptide is Nonsense-mediated mRNA decay factor SMG8 (Drosophila mojavensis (Fruit fly)).